A 221-amino-acid chain; its full sequence is Protein myomaker (221 aa).

The Extracellular segment spans residues 1–3 (MGT). The chain crosses the membrane as a helical span at residues 4 to 24 (LVAKLLLPTLSSLAFLPTVSI). Residues 25–34 (AAKRRFHMEA) lie on the Cytoplasmic side of the membrane. The chain crosses the membrane as a helical span at residues 35 to 55 (MVYLFTLFFVALHHACNGPGL). Topologically, residues 56–64 (SVLCFMRHD) are extracellular. The chain crosses the membrane as a helical span at residues 65–85 (ILEYFSVYGTALSMWVSLMAL). The Cytoplasmic segment spans residues 86–92 (ADFDEPK). The helical transmembrane segment at 93–110 (RSTFVMFGVLTIAVRIYH) threads the bilayer. The Extracellular segment spans residues 111–113 (DRW). A helical transmembrane segment spans residues 114–134 (GYGVYSGPIGTAILIIAAKWL). The Cytoplasmic portion of the chain corresponds to 135 to 153 (QKMKEKKGLYPDKSVYTQQ). A helical transmembrane segment spans residues 154-174 (IGPGLCFGALALMLRFFFEDW). Residue Asp175 is a topological domain, extracellular. Residues 176–196 (YTYVHSFYHCALAMSFVLLLP) form a helical membrane-spanning segment. Over 197–221 (KVNKKAGSPGTPAKLDCSTLCCACV) the chain is Cytoplasmic. Residues Cys217 and Cys218 are each lipidated (S-palmitoyl cysteine).

The protein belongs to the TMEM8 family. As to quaternary structure, interacts with MYMX. Post-translationally, palmitoylated at the C-terminus; palmitoylation promotes localization to the Golgi apparatus.

The protein localises to the cell membrane. Its subcellular location is the golgi apparatus membrane. Its function is as follows. Myoblast-specific protein that mediates myoblast fusion, an essential step for the formation of multi-nucleated muscle fibers. Actively participates in the membrane fusion reaction by mediating the mixing of cell membrane lipids (hemifusion) upstream of MYMX. Acts independently of MYMX. Involved in skeletal muscle regeneration in response to injury by mediating the fusion of satellite cells, a population of muscle stem cells, with injured myofibers. Also involved in skeletal muscle hypertrophy, probably by mediating the fusion of satellite cells with myofibers. In Homo sapiens (Human), this protein is Protein myomaker.